A 261-amino-acid chain; its full sequence is uncharacterized protein (261 aa).

41–48 (GKSGSGKS) is an ATP binding site.

It belongs to the IIV-6 075L family.

This is an uncharacterized protein from Invertebrate iridescent virus 3 (IIV-3).